The chain runs to 406 residues: Tyrosine--tRNA ligase (406 aa).

Tyr35 is an L-tyrosine binding site. A 'HIGH' region motif is present at residues 40–49 (ATSASLHIGH). L-tyrosine-binding residues include Tyr167 and Gln171. The 'KMSKS' region signature appears at 227–231 (KMGKS). Lys230 is an ATP binding site. Residues 341–405 (ILLVDLMVLA…IGKKKILRIV (65 aa)) enclose the S4 RNA-binding domain.

The protein belongs to the class-I aminoacyl-tRNA synthetase family. TyrS type 1 subfamily. As to quaternary structure, homodimer.

It is found in the cytoplasm. The enzyme catalyses tRNA(Tyr) + L-tyrosine + ATP = L-tyrosyl-tRNA(Tyr) + AMP + diphosphate + H(+). Catalyzes the attachment of tyrosine to tRNA(Tyr) in a two-step reaction: tyrosine is first activated by ATP to form Tyr-AMP and then transferred to the acceptor end of tRNA(Tyr). This is Tyrosine--tRNA ligase from Borrelia recurrentis (strain A1).